Reading from the N-terminus, the 143-residue chain is Nucleoside diphosphate kinase (143 aa).

6 residues coordinate ATP: lysine 11, phenylalanine 59, arginine 87, threonine 93, arginine 104, and asparagine 114. Histidine 117 acts as the Pros-phosphohistidine intermediate in catalysis.

Belongs to the NDK family. As to quaternary structure, homotetramer. Mg(2+) is required as a cofactor.

Its subcellular location is the cytoplasm. The catalysed reaction is a 2'-deoxyribonucleoside 5'-diphosphate + ATP = a 2'-deoxyribonucleoside 5'-triphosphate + ADP. It catalyses the reaction a ribonucleoside 5'-diphosphate + ATP = a ribonucleoside 5'-triphosphate + ADP. Its function is as follows. Major role in the synthesis of nucleoside triphosphates other than ATP. The ATP gamma phosphate is transferred to the NDP beta phosphate via a ping-pong mechanism, using a phosphorylated active-site intermediate. This chain is Nucleoside diphosphate kinase, found in Shigella boydii serotype 4 (strain Sb227).